We begin with the raw amino-acid sequence, 165 residues long: Lithostathine (165 aa).

An N-terminal signal peptide occupies residues 1 to 21; the sequence is MTRNKYFILLSCLMVLSPSQG. Gln-22 carries the pyrrolidone carboxylic acid modification. The region spanning 33–163 is the C-type lectin domain; it reads ITCPEGSNAY…DAQLSFVCKF (131 aa). Cystine bridges form between Cys-35–Cys-46, Cys-63–Cys-161, and Cys-136–Cys-153. An N-linked (GlcNAc...) asparagine glycan is attached at Asn-129.

Expressed only in regenerating islets, but not in normal pancreatic islets, insulinomas or regenerating liver.

It is found in the secreted. Might act as an inhibitor of spontaneous calcium carbonate precipitation. In Rattus norvegicus (Rat), this protein is Lithostathine (Reg1).